A 342-amino-acid chain; its full sequence is Cytosolic Fe-S cluster assembly factor NBP35 (342 aa).

The tract at residues 16–42 is disordered; the sequence is SKAAPKLVAPEPEHCPGPESEQAGKGD. The [4Fe-4S] cluster site is built by cysteine 30, cysteine 44, cysteine 47, and cysteine 53. ATP is bound at residue 83-90; it reads GKGGVGKS. [4Fe-4S] cluster contacts are provided by cysteine 256 and cysteine 259.

It belongs to the Mrp/NBP35 ATP-binding proteins family. NUBP1/NBP35 subfamily. Heterotetramer of 2 NBP35 and 2 CFD1 chains. The cofactor is [4Fe-4S] cluster.

It localises to the cytoplasm. In terms of biological role, component of the cytosolic iron-sulfur (Fe/S) protein assembly (CIA) machinery. Required for maturation of extramitochondrial Fe-S proteins. The NBP35-CFD1 heterotetramer forms a Fe-S scaffold complex, mediating the de novo assembly of an Fe-S cluster and its transfer to target apoproteins. In Coccidioides immitis (strain RS) (Valley fever fungus), this protein is Cytosolic Fe-S cluster assembly factor NBP35.